A 751-amino-acid polypeptide reads, in one-letter code: Lysine decarboxylase LdcA (751 aa).

This sequence belongs to the Orn/Lys/Arg decarboxylase class-I family. Homodecamer.

The enzyme catalyses L-lysine + H(+) = cadaverine + CO2. Plays an essential role in lysine utilization by acting as a lysine decarboxylase. This is Lysine decarboxylase LdcA from Pseudomonas aeruginosa (strain ATCC 15692 / DSM 22644 / CIP 104116 / JCM 14847 / LMG 12228 / 1C / PRS 101 / PAO1).